The following is a 472-amino-acid chain: MPNENAEDLSGQELKQKAKEVADASEAMLEKVVAGLNIQDTASTNAAGNEDAEQPDGAKNEASVSANASKQALLQAVSDAMASTRQMAKKFAFWSTQPVTKLDEQVTTNECIEPNKEISEIRALPYTLPGGFKWVTLDLNDANDLKELYTLLNENYVEDDDAMFRFDYQPEFLKWSLQPPGWKRDWHVGVRVEKSGKLVGFISAIPSKLKSYDKVLKVVDINFLCVHKKLRSKRVAPVLIREITRRVNLTGIFQAAYTAGVVLPTPVATCRYWHRSLNPKKLVDVRFSHLARNMTMQRTMKLYKLPDQPKTKGYRRITAKDMDKAHKLLEDYLKRFQLSPVFSKEEFRHWFTPKEGIIDCFVVADEKGNITDLTSYYCLPSSVMHHPVHKTVRAAYSFYNVSTKTPWLDLMNDALISARNVQMDVYNALDLMENKKYFAPLKFGAGDGNLQYYLYNWRCPSMQPEEIALILM.

2 disordered regions span residues 1-23 (MPNENAEDLSGQELKQKAKEVAD) and 43-65 (STNAAGNEDAEQPDGAKNEASVS). Tetradecanoyl-CoA-binding residues include Phe-93, Trp-94, Phe-223, Leu-224, Cys-225, Val-226, Ser-232, Arg-234, Val-235, and Ala-236.

The protein belongs to the NMT family.

The protein localises to the membrane. It carries out the reaction N-terminal glycyl-[protein] + tetradecanoyl-CoA = N-tetradecanoylglycyl-[protein] + CoA + H(+). Its function is as follows. Adds a myristoyl group (tetradecanoyl group) to the N-terminal glycine residue of certain cellular proteins. Such protein modification are critical for the developmental processes that involve cell shape changes and movement. The chain is Glycylpeptide N-tetradecanoyltransferase (Nmt) from Drosophila melanogaster (Fruit fly).